We begin with the raw amino-acid sequence, 240 residues long: Ubiquinone biosynthesis O-methyltransferase (240 aa).

4 residues coordinate S-adenosyl-L-methionine: Arg-44, Gly-64, Asp-85, and Met-129.

The protein belongs to the methyltransferase superfamily. UbiG/COQ3 family.

The catalysed reaction is a 3-demethylubiquinol + S-adenosyl-L-methionine = a ubiquinol + S-adenosyl-L-homocysteine + H(+). It carries out the reaction a 3-(all-trans-polyprenyl)benzene-1,2-diol + S-adenosyl-L-methionine = a 2-methoxy-6-(all-trans-polyprenyl)phenol + S-adenosyl-L-homocysteine + H(+). The protein operates within cofactor biosynthesis; ubiquinone biosynthesis. Its function is as follows. O-methyltransferase that catalyzes the 2 O-methylation steps in the ubiquinone biosynthetic pathway. The sequence is that of Ubiquinone biosynthesis O-methyltransferase from Escherichia coli O6:H1 (strain CFT073 / ATCC 700928 / UPEC).